A 272-amino-acid chain; its full sequence is Phosphoglycolate phosphatase (272 aa).

The active-site Nucleophile is the aspartate 19. Aspartate 19, aspartate 21, and aspartate 182 together coordinate Mg(2+).

This sequence belongs to the HAD-like hydrolase superfamily. CbbY/CbbZ/Gph/YieH family. Mg(2+) serves as cofactor.

It carries out the reaction 2-phosphoglycolate + H2O = glycolate + phosphate. The protein operates within organic acid metabolism; glycolate biosynthesis; glycolate from 2-phosphoglycolate: step 1/1. Its function is as follows. Specifically catalyzes the dephosphorylation of 2-phosphoglycolate. Is involved in the dissimilation of the intracellular 2-phosphoglycolate formed during the DNA repair of 3'-phosphoglycolate ends, a major class of DNA lesions induced by oxidative stress. The protein is Phosphoglycolate phosphatase of Pseudomonas syringae pv. tomato (strain ATCC BAA-871 / DC3000).